The primary structure comprises 251 residues: MARADGRSDDALREVRITRGYQDWPAGSVLVEFGRTRVLCAASVQEGVPRWRAGSGLGWVTAEYAMLPSSTNTRSARESVKGRIGGRTHEISRLVGRSLRACIDLAALGENTIALDCDVIQADGGTRTAAITGAYVALADAITWLSAAGRLTDPKPLSCSIAAVSVGVVDGRVRLDLPYEEDSRAEVDMNVVATDHGTLVEVQGTGEGATFTRSTMDKMIDFALAGCSELSRIQSEALAAPYPGELPGGAA.

Phosphate-binding positions include arginine 87 and 125 to 127; that span reads GTR.

It belongs to the RNase PH family. As to quaternary structure, homohexameric ring arranged as a trimer of dimers.

It catalyses the reaction tRNA(n+1) + phosphate = tRNA(n) + a ribonucleoside 5'-diphosphate. Its function is as follows. Phosphorolytic 3'-5' exoribonuclease that plays an important role in tRNA 3'-end maturation. Removes nucleotide residues following the 3'-CCA terminus of tRNAs; can also add nucleotides to the ends of RNA molecules by using nucleoside diphosphates as substrates, but this may not be physiologically important. Probably plays a role in initiation of 16S rRNA degradation (leading to ribosome degradation) during starvation. The polypeptide is Ribonuclease PH (Saccharopolyspora erythraea (strain ATCC 11635 / DSM 40517 / JCM 4748 / NBRC 13426 / NCIMB 8594 / NRRL 2338)).